Reading from the N-terminus, the 684-residue chain is Glycine--tRNA ligase beta subunit (684 aa).

The protein belongs to the class-II aminoacyl-tRNA synthetase family. In terms of assembly, tetramer of two alpha and two beta subunits.

The protein resides in the cytoplasm. It carries out the reaction tRNA(Gly) + glycine + ATP = glycyl-tRNA(Gly) + AMP + diphosphate. In Pseudomonas putida (strain ATCC 47054 / DSM 6125 / CFBP 8728 / NCIMB 11950 / KT2440), this protein is Glycine--tRNA ligase beta subunit.